A 115-amino-acid polypeptide reads, in one-letter code: UPF0738 protein SAB0871 (115 aa).

Belongs to the UPF0738 family.

The polypeptide is UPF0738 protein SAB0871 (Staphylococcus aureus (strain bovine RF122 / ET3-1)).